A 140-amino-acid chain; its full sequence is MEVILKFGILGFGAIFGYLFGEVDLLVKVLVCFIVADYISGLLASGYLGELSSKMGFKGIAKKIAILILVAIAHQIDLILGTHNTTRDAVIFFYLANELISILENFVRMGMKVPEVLKNLILIFDAKSGEDEEKHDKDMD.

2 consecutive transmembrane segments (helical) span residues 4-21 (ILKFGILGFGAIFGYLFG) and 26-48 (LVKVLVCFIVADYISGLLASGYL).

It belongs to the bacteriophage holin family. Cp-1 holin subfamily.

Its subcellular location is the cell membrane. This is an uncharacterized protein from Listeria monocytogenes serovar 1/2a (strain ATCC BAA-679 / EGD-e).